We begin with the raw amino-acid sequence, 192 residues long: Molybdenum cofactor guanylyltransferase (192 aa).

GTP contacts are provided by residues 10–12, lysine 23, asparagine 51, aspartate 69, and aspartate 99; that span reads LAG. Aspartate 99 provides a ligand contact to Mg(2+).

This sequence belongs to the MobA family. As to quaternary structure, monomer. It depends on Mg(2+) as a cofactor.

It is found in the cytoplasm. It catalyses the reaction Mo-molybdopterin + GTP + H(+) = Mo-molybdopterin guanine dinucleotide + diphosphate. In terms of biological role, transfers a GMP moiety from GTP to Mo-molybdopterin (Mo-MPT) cofactor (Moco or molybdenum cofactor) to form Mo-molybdopterin guanine dinucleotide (Mo-MGD) cofactor. The chain is Molybdenum cofactor guanylyltransferase from Haemophilus influenzae (strain 86-028NP).